The sequence spans 253 residues: Imidazole glycerol phosphate synthase subunit HisF (253 aa).

Active-site residues include Asp11 and Asp130.

This sequence belongs to the HisA/HisF family. In terms of assembly, heterodimer of HisH and HisF.

The protein localises to the cytoplasm. The catalysed reaction is 5-[(5-phospho-1-deoxy-D-ribulos-1-ylimino)methylamino]-1-(5-phospho-beta-D-ribosyl)imidazole-4-carboxamide + L-glutamine = D-erythro-1-(imidazol-4-yl)glycerol 3-phosphate + 5-amino-1-(5-phospho-beta-D-ribosyl)imidazole-4-carboxamide + L-glutamate + H(+). The protein operates within amino-acid biosynthesis; L-histidine biosynthesis; L-histidine from 5-phospho-alpha-D-ribose 1-diphosphate: step 5/9. Its function is as follows. IGPS catalyzes the conversion of PRFAR and glutamine to IGP, AICAR and glutamate. The HisF subunit catalyzes the cyclization activity that produces IGP and AICAR from PRFAR using the ammonia provided by the HisH subunit. The sequence is that of Imidazole glycerol phosphate synthase subunit HisF from Clostridium beijerinckii (strain ATCC 51743 / NCIMB 8052) (Clostridium acetobutylicum).